A 206-amino-acid polypeptide reads, in one-letter code: Flavin reductase (NADPH) (206 aa).

Positions 10, 12, 13, 14, 15, 35, 38, and 39 each coordinate NADP(+). At serine 42 the chain carries Phosphoserine. NADP(+)-binding residues include aspartate 54, valine 55, leucine 75, glycine 76, and arginine 78. Serine 82 bears the Phosphoserine mark. NADP(+) contacts are provided by methionine 87, cysteine 109, histidine 132, histidine 153, and isoleucine 154. Catalysis depends on cysteine 109, which acts as the S-nitroso-cysteine intermediate; for S-nitroso-CoA-dependent nitrosyltransferase activity. The S-nitroso-cysteine intermediate; for S-nitroso-CoA-dependent nitrosyltransferase activity role is filled by cysteine 188.

This sequence belongs to the BLVRB family. In terms of assembly, monomer. Predominantly expressed in liver and erythrocytes. At lower levels in heart, lung, adrenal gland and cerebrum. Expressed in adult red blood cells.

The protein resides in the cytoplasm. The catalysed reaction is reduced riboflavin + NADP(+) = riboflavin + NADPH + 2 H(+). The enzyme catalyses bilirubin IXbeta + NADP(+) = biliverdin IXbeta + NADPH + H(+). It catalyses the reaction FMNH2 + NAD(+) = FMN + NADH + 2 H(+). It carries out the reaction FMNH2 + NADP(+) = FMN + NADPH + 2 H(+). The catalysed reaction is S-nitroso-CoA + L-cysteinyl-[protein] = S-nitroso-L-cysteinyl-[protein] + CoA. The enzyme catalyses L-cysteinyl-[SCAN] + S-nitroso-CoA = S-nitroso-L-cysteinyl-[SCAN] + CoA. It catalyses the reaction S-nitroso-L-cysteinyl-[SCAN] + L-cysteinyl-[protein] = L-cysteinyl-[SCAN] + S-nitroso-L-cysteinyl-[protein]. Its activity is regulated as follows. Mesobiliverdin acts as a competitive inhibitor for flavin reduction, indicating that flavin and tetrapyrrole substrates compete for the same site. Inhibited by a wide range of xanthene-based drugs, such as phloxine B, erythrosin B, tamibarotene, sulfasalazine, olsalazine, febuxostat, ataluren (PTC124) and deferasirox. Its function is as follows. Enzyme that can both act as a NAD(P)H-dependent reductase and a S-nitroso-CoA-dependent nitrosyltransferase. Promotes fetal heme degradation during development. Also expressed in adult tissues, where it acts as a regulator of hematopoiesis, intermediary metabolism (glutaminolysis, glycolysis, TCA cycle and pentose phosphate pathway) and insulin signaling. Has a broad specificity oxidoreductase activity by catalyzing the NAD(P)H-dependent reduction of a variety of flavins, such as riboflavin, FAD or FMN, biliverdins, methemoglobin and PQQ (pyrroloquinoline quinone). Contributes to fetal heme catabolism by catalyzing reduction of biliverdin IXbeta into bilirubin IXbeta in the liver. Biliverdin IXbeta, which constitutes the major heme catabolite in the fetus is not present in adult. Does not reduce bilirubin IXalpha. Can also reduce the complexed Fe(3+) iron to Fe(2+) in the presence of FMN and NADPH. Acts as a protein nitrosyltransferase by catalyzing nitrosylation of cysteine residues of target proteins, such as HMOX2, INSR and IRS1. S-nitroso-CoA-dependent nitrosyltransferase activity is mediated via a 'ping-pong' mechanism: BLVRB first associates with both S-nitroso-CoA and protein substrate, nitric oxide group is then transferred from S-nitroso-CoA to Cys-109 and Cys-188 residues of BLVRB and from S-nitroso-BLVRB to the protein substrate. Inhibits insulin signaling by mediating nitrosylation of INSR and IRS1, leading to their inhibition. This Homo sapiens (Human) protein is Flavin reductase (NADPH).